The sequence spans 534 residues: Calcium-dependent protein kinase 29 (534 aa).

The segment at 1 to 72 is disordered; that stretch reads MGFCFSKFGK…STSSGSQIGP (72 aa). Gly2 carries N-myristoyl glycine lipidation. Low complexity predominate over residues 16–27; the sequence is IPISSSSDSSPP. Positions 49 to 63 are enriched in pro residues; that stretch reads NPQPKPKPAPPPPPS. The 259-residue stretch at 85–343 folds into the Protein kinase domain; sequence YDLHKELGRG…AAEALEHPWM (259 aa). ATP is bound by residues 91–99 and Lys114; that span reads LGRGQFGIT. Asp209 (proton acceptor) is an active-site residue. Ser249 is subject to Phosphoserine. The tract at residues 348-378 is autoinhibitory domain; the sequence is ISDKPINSAVLVRMKQFRAMNKLKKLALKVI. EF-hand domains follow at residues 385–420, 421–456, 457–492, and 493–527; these read EEIK…LGSK, LTES…RHRL, EKEE…YGMG, and DDAT…GTTD. 19 residues coordinate Ca(2+): Asp398, Asp400, Ser402, Thr404, Glu409, Asp434, Asp436, Ser438, Thr440, Glu445, Asp470, Asp472, Ser474, Glu481, Asp505, Asp507, Asp509, Arg511, and Glu516.

It belongs to the protein kinase superfamily. Ser/Thr protein kinase family. CDPK subfamily.

The protein resides in the membrane. It catalyses the reaction L-seryl-[protein] + ATP = O-phospho-L-seryl-[protein] + ADP + H(+). The enzyme catalyses L-threonyl-[protein] + ATP = O-phospho-L-threonyl-[protein] + ADP + H(+). Activated by calcium. Autophosphorylation may play an important role in the regulation of the kinase activity. Its function is as follows. May play a role in signal transduction pathways that involve calcium as a second messenger. This Arabidopsis thaliana (Mouse-ear cress) protein is Calcium-dependent protein kinase 29 (CPK29).